The following is a 276-amino-acid chain: Formamidopyrimidine-DNA glycosylase (276 aa).

The Schiff-base intermediate with DNA role is filled by proline 2. Residue glutamate 3 is the Proton donor of the active site. Catalysis depends on lysine 58, which acts as the Proton donor; for beta-elimination activity. The DNA site is built by histidine 92, arginine 111, and arginine 154. An FPG-type zinc finger spans residues 239-273 (HAYQRTGDPCERCGTPIQRIVVGQRGTHFCPKCQV). The active-site Proton donor; for delta-elimination activity is arginine 263.

This sequence belongs to the FPG family. Monomer. Zn(2+) serves as cofactor.

It carries out the reaction Hydrolysis of DNA containing ring-opened 7-methylguanine residues, releasing 2,6-diamino-4-hydroxy-5-(N-methyl)formamidopyrimidine.. It catalyses the reaction 2'-deoxyribonucleotide-(2'-deoxyribose 5'-phosphate)-2'-deoxyribonucleotide-DNA = a 3'-end 2'-deoxyribonucleotide-(2,3-dehydro-2,3-deoxyribose 5'-phosphate)-DNA + a 5'-end 5'-phospho-2'-deoxyribonucleoside-DNA + H(+). Involved in base excision repair of DNA damaged by oxidation or by mutagenic agents. Acts as a DNA glycosylase that recognizes and removes damaged bases. Has a preference for oxidized purines, such as 7,8-dihydro-8-oxoguanine (8-oxoG). Has AP (apurinic/apyrimidinic) lyase activity and introduces nicks in the DNA strand. Cleaves the DNA backbone by beta-delta elimination to generate a single-strand break at the site of the removed base with both 3'- and 5'-phosphates. The sequence is that of Formamidopyrimidine-DNA glycosylase from Ligilactobacillus salivarius (strain UCC118) (Lactobacillus salivarius).